Consider the following 115-residue polypeptide: Large ribosomal subunit protein bL20c (115 aa).

The protein belongs to the bacterial ribosomal protein bL20 family.

Its subcellular location is the plastid. It localises to the organellar chromatophore. In terms of biological role, binds directly to 23S ribosomal RNA and is necessary for the in vitro assembly process of the 50S ribosomal subunit. It is not involved in the protein synthesizing functions of that subunit. This chain is Large ribosomal subunit protein bL20c, found in Paulinella chromatophora.